Here is a 316-residue protein sequence, read N- to C-terminus: 4-hydroxy-3-methylbut-2-enyl diphosphate reductase (316 aa).

C12 lines the [4Fe-4S] cluster pocket. 2 residues coordinate (2E)-4-hydroxy-3-methylbut-2-enyl diphosphate: H41 and H74. Positions 41 and 74 each coordinate dimethylallyl diphosphate. Residues H41 and H74 each coordinate isopentenyl diphosphate. C96 lines the [4Fe-4S] cluster pocket. H124 provides a ligand contact to (2E)-4-hydroxy-3-methylbut-2-enyl diphosphate. A dimethylallyl diphosphate-binding site is contributed by H124. H124 is an isopentenyl diphosphate binding site. E126 serves as the catalytic Proton donor. T167 contributes to the (2E)-4-hydroxy-3-methylbut-2-enyl diphosphate binding site. A [4Fe-4S] cluster-binding site is contributed by C197. S225, S226, N227, and S269 together coordinate (2E)-4-hydroxy-3-methylbut-2-enyl diphosphate. The dimethylallyl diphosphate site is built by S225, S226, N227, and S269. S225, S226, N227, and S269 together coordinate isopentenyl diphosphate.

This sequence belongs to the IspH family. In terms of assembly, homodimer. It depends on [4Fe-4S] cluster as a cofactor.

The enzyme catalyses isopentenyl diphosphate + 2 oxidized [2Fe-2S]-[ferredoxin] + H2O = (2E)-4-hydroxy-3-methylbut-2-enyl diphosphate + 2 reduced [2Fe-2S]-[ferredoxin] + 2 H(+). It catalyses the reaction dimethylallyl diphosphate + 2 oxidized [2Fe-2S]-[ferredoxin] + H2O = (2E)-4-hydroxy-3-methylbut-2-enyl diphosphate + 2 reduced [2Fe-2S]-[ferredoxin] + 2 H(+). The protein operates within isoprenoid biosynthesis; dimethylallyl diphosphate biosynthesis; dimethylallyl diphosphate from (2E)-4-hydroxy-3-methylbutenyl diphosphate: step 1/1. Its pathway is isoprenoid biosynthesis; isopentenyl diphosphate biosynthesis via DXP pathway; isopentenyl diphosphate from 1-deoxy-D-xylulose 5-phosphate: step 6/6. In terms of biological role, catalyzes the conversion of 1-hydroxy-2-methyl-2-(E)-butenyl 4-diphosphate (HMBPP) into a mixture of isopentenyl diphosphate (IPP) and dimethylallyl diphosphate (DMAPP). Acts in the terminal step of the DOXP/MEP pathway for isoprenoid precursor biosynthesis. The chain is 4-hydroxy-3-methylbut-2-enyl diphosphate reductase from Salmonella schwarzengrund (strain CVM19633).